A 253-amino-acid polypeptide reads, in one-letter code: ER membrane protein complex subunit 3 (253 aa).

3 helical membrane-spanning segments follow: residues Trp10–Met30, Phe126–Met146, and Ser176–Leu196.

This sequence belongs to the EMC3 family. As to quaternary structure, component of the ER membrane protein complex (EMC), which is composed of EMC1, EMC2, EMC3, EMC4, EMC5 and EMC6.

It localises to the endoplasmic reticulum membrane. Its function is as follows. The EMC seems to be required for efficient folding of proteins in the endoplasmic reticulum (ER). This is ER membrane protein complex subunit 3 (AIM27) from Saccharomyces cerevisiae (strain RM11-1a) (Baker's yeast).